A 264-amino-acid chain; its full sequence is H-2 class II histocompatibility antigen, E-D beta chain (264 aa).

An N-terminal signal peptide occupies residues 1–31 (MVWLPRVPCVAAVILLLTVLSPPVALVRDTR). Residues 32–121 (PRFLEYVTSE…ISDKFLVRRR (90 aa)) are beta-1. At 32–225 (PRFLEYVTSE…KAQSTSAQNK (194 aa)) the chain is on the extracellular side. Disulfide bonds link Cys-42–Cys-106 and Cys-144–Cys-200. N-linked (GlcNAc...) asparagine glycosylation is present at Asn-46. The beta-2 stretch occupies residues 122–215 (VEPTVTVYPT…SLTDPVTVEW (94 aa)). In terms of domain architecture, Ig-like C1-type spans 124–214 (PTVTVYPTKT…PSLTDPVTVE (91 aa)). A connecting peptide region spans residues 216-225 (KAQSTSAQNK). Residues 226–248 (MLSGVGGFVLGLLFLGAGLFIYF) form a helical membrane-spanning segment. At 249–264 (RNQKGQSGLQPTGLLS) the chain is on the cytoplasmic side.

The protein belongs to the MHC class II family.

The protein localises to the membrane. This chain is H-2 class II histocompatibility antigen, E-D beta chain, found in Mus musculus (Mouse).